A 125-amino-acid polypeptide reads, in one-letter code: Small ribosomal subunit protein eS25 (125 aa).

Residues 1–23 (MPPKDDKKKKDAGKSAKKDKDPV) show a composition bias toward basic and acidic residues. Residues 1–38 (MPPKDDKKKKDAGKSAKKDKDPVNKSGGKAKKKKWSKG) form a disordered region. Residues 28-38 (GKAKKKKWSKG) are compositionally biased toward basic residues. An N6-acetyllysine modification is found at lysine 43. Lysine 52 carries the N6-acetyllysine; alternate modification. The residue at position 52 (lysine 52) is an N6-succinyllysine; alternate. Residues lysine 60 and lysine 66 each carry the N6-acetyllysine modification. Lysine 94 bears the N6-acetyllysine; alternate mark. Lysine 94 bears the N6-succinyllysine; alternate mark.

Belongs to the eukaryotic ribosomal protein eS25 family. In terms of assembly, component of the small ribosomal subunit.

The protein resides in the cytoplasm. Its function is as follows. Component of the small ribosomal subunit. The ribosome is a large ribonucleoprotein complex responsible for the synthesis of proteins in the cell. The polypeptide is Small ribosomal subunit protein eS25 (RPS25) (Homo sapiens (Human)).